We begin with the raw amino-acid sequence, 89 residues long: Small ribosomal subunit protein bS16c (89 aa).

Belongs to the bacterial ribosomal protein bS16 family.

The protein resides in the plastid. Its subcellular location is the chloroplast. This chain is Small ribosomal subunit protein bS16c, found in Drimys granadensis.